The primary structure comprises 407 residues: MTAHCPEDPSLERHFKGHRDAVTSVDFSLNTKQLASGSMDSCLMVWHMKPQTRAYRFAGHKDAVTCVNFSPSGHLLASGSRDKTVRIWVPNVKGESTVFRAHTATVRSVHFCSDGQSFVTASDDKTVKVWSTHRQKFLFSLSQHINWVRCAKFSPDGRLIVSASDDKTVKLWDKTSRECVHSYCEHGGFVTYVDFHPSGTCIAAAGMDNTVKVWDVRTHRLLQHYQLHSAAVNALSFHPSGNYLVTASSDSTLKILDLMEGRLLYTLHGHQGPATTVAFSRTGEYFASGGSDEQVMVWKSNFDIVDYGEVLRVQRPPATRASSSGTLPEVDPLVPPGRGRSQESMQSHSQEPVSVPQSLTSTLEHIVGQLDVLTQTVSILEQRLTLTEDKLKQCLENQQLIMQRTTP.

WD repeat units lie at residues 17–56, 59–98, 101–140, 143–182, 185–224, 227–266, and 269–308; these read GHRD…RAYR, GHKD…ESTV, AHTA…FLFS, QHIN…CVHS, EHGG…LLQH, LHSA…LLYT, and GHQG…VDYG. The tract at residues 317–357 is disordered; sequence PATRASSSGTLPEVDPLVPPGRGRSQESMQSHSQEPVSVPQ. Polar residues predominate over residues 342-357; it reads QESMQSHSQEPVSVPQ. Residues 369–397 are a coiled coil; the sequence is QLDVLTQTVSILEQRLTLTEDKLKQCLEN.

This sequence belongs to the WD repeat POC1 family. As to quaternary structure, interacts with POC1B.

The protein resides in the cytoplasm. It localises to the cytoskeleton. It is found in the microtubule organizing center. Its subcellular location is the centrosome. The protein localises to the centriole. The protein resides in the cilium basal body. It localises to the spindle pole. In terms of biological role, plays an important role in centriole assembly and/or stability and ciliogenesis. Involved in early steps of centriole duplication, as well as in the later steps of centriole length control. Acts in concert with POC1B to ensure centriole integrity and proper mitotic spindle formation. This Bos taurus (Bovine) protein is POC1 centriolar protein homolog A (POC1A).